Reading from the N-terminus, the 243-residue chain is UDP-2,3-diacylglucosamine hydrolase (243 aa).

Positions 9, 11, 42, 79, and 114 each coordinate Mn(2+). Substrate is bound at residue 79 to 80 (NR). 4 residues coordinate substrate: Asp-122, Ser-160, Asn-164, and His-195. Positions 195 and 197 each coordinate Mn(2+).

This sequence belongs to the LpxH family. It depends on Mn(2+) as a cofactor.

The protein resides in the cell inner membrane. It catalyses the reaction UDP-2-N,3-O-bis[(3R)-3-hydroxytetradecanoyl]-alpha-D-glucosamine + H2O = 2-N,3-O-bis[(3R)-3-hydroxytetradecanoyl]-alpha-D-glucosaminyl 1-phosphate + UMP + 2 H(+). Its pathway is glycolipid biosynthesis; lipid IV(A) biosynthesis; lipid IV(A) from (3R)-3-hydroxytetradecanoyl-[acyl-carrier-protein] and UDP-N-acetyl-alpha-D-glucosamine: step 4/6. Its function is as follows. Hydrolyzes the pyrophosphate bond of UDP-2,3-diacylglucosamine to yield 2,3-diacylglucosamine 1-phosphate (lipid X) and UMP by catalyzing the attack of water at the alpha-P atom. Involved in the biosynthesis of lipid A, a phosphorylated glycolipid that anchors the lipopolysaccharide to the outer membrane of the cell. The sequence is that of UDP-2,3-diacylglucosamine hydrolase from Coxiella burnetii (strain Dugway 5J108-111).